A 166-amino-acid chain; its full sequence is Large ribosomal subunit protein bL9 (166 aa).

This sequence belongs to the bacterial ribosomal protein bL9 family.

Binds to the 23S rRNA. The protein is Large ribosomal subunit protein bL9 of Borrelia garinii subsp. bavariensis (strain ATCC BAA-2496 / DSM 23469 / PBi) (Borreliella bavariensis).